Reading from the N-terminus, the 69-residue chain is Cytoinsectotoxin-2a (69 aa).

This sequence belongs to the cationic peptide 06 (cytoinsectotoxin) family. As to expression, expressed by the venom gland.

Its subcellular location is the secreted. In terms of biological role, insecticidal and antimicrobial peptide. Has insecticidal activity against larvae of flesh fly S.carnaria. Has antibacterial activity against Gram-positive bacterium B.subtilis B-501 (MIC=1.25 uM) and Gram-negative bacterium E.coli DH5alpha (MIC=2.5 uM). The polypeptide is Cytoinsectotoxin-2a (Lachesana tarabaevi (Spider)).